The sequence spans 437 residues: Phenylacetate-coenzyme A ligase (437 aa).

This sequence belongs to the phenylacetyl-CoA ligase family. As to quaternary structure, monomer.

It carries out the reaction 2-phenylacetate + ATP + CoA = phenylacetyl-CoA + AMP + diphosphate. Its pathway is aromatic compound metabolism; phenylacetate degradation. Catalyzes the activation of phenylacetic acid (PA) to phenylacetyl-CoA (PA-CoA). This is Phenylacetate-coenzyme A ligase (paaK) from Escherichia coli (strain K12).